Consider the following 552-residue polypeptide: Dihydroxy-acid dehydratase (552 aa).

C46 is a [2Fe-2S] cluster binding site. D78 is a Mg(2+) binding site. Residue C119 coordinates [2Fe-2S] cluster. Residues D120 and K121 each contribute to the Mg(2+) site. An N6-carboxylysine modification is found at K121. Residue C191 participates in [2Fe-2S] cluster binding. E442 contributes to the Mg(2+) binding site. The active-site Proton acceptor is the S468.

It belongs to the IlvD/Edd family. As to quaternary structure, homodimer. It depends on [2Fe-2S] cluster as a cofactor. Mg(2+) serves as cofactor.

It carries out the reaction (2R)-2,3-dihydroxy-3-methylbutanoate = 3-methyl-2-oxobutanoate + H2O. It catalyses the reaction (2R,3R)-2,3-dihydroxy-3-methylpentanoate = (S)-3-methyl-2-oxopentanoate + H2O. It participates in amino-acid biosynthesis; L-isoleucine biosynthesis; L-isoleucine from 2-oxobutanoate: step 3/4. The protein operates within amino-acid biosynthesis; L-valine biosynthesis; L-valine from pyruvate: step 3/4. Functions in the biosynthesis of branched-chain amino acids. Catalyzes the dehydration of (2R,3R)-2,3-dihydroxy-3-methylpentanoate (2,3-dihydroxy-3-methylvalerate) into 2-oxo-3-methylpentanoate (2-oxo-3-methylvalerate) and of (2R)-2,3-dihydroxy-3-methylbutanoate (2,3-dihydroxyisovalerate) into 2-oxo-3-methylbutanoate (2-oxoisovalerate), the penultimate precursor to L-isoleucine and L-valine, respectively. This Picrophilus torridus (strain ATCC 700027 / DSM 9790 / JCM 10055 / NBRC 100828 / KAW 2/3) protein is Dihydroxy-acid dehydratase.